Reading from the N-terminus, the 249-residue chain is ATP synthase subunit a (249 aa).

The next 6 membrane-spanning stretches (helical) occupy residues 30 to 50, 86 to 106, 115 to 135, 146 to 166, 191 to 211, and 218 to 238; these read QSPLFMLIAAAVVLVFLYVGM, FFPFVFAIFFFILAGNYLGLL, HIAVTFGLAIMVFIISILASI, FLPAGTPVWLAPLLVPIEIIS, VFAGFTIMLAGLGAFGHVLAI, and IALTALELLVGVLQAYVFAIL.

This sequence belongs to the ATPase A chain family. In terms of assembly, F-type ATPases have 2 components, CF(1) - the catalytic core - and CF(0) - the membrane proton channel. CF(1) has five subunits: alpha(3), beta(3), gamma(1), delta(1), epsilon(1). CF(0) has three main subunits: a(1), b(2) and c(9-12). The alpha and beta chains form an alternating ring which encloses part of the gamma chain. CF(1) is attached to CF(0) by a central stalk formed by the gamma and epsilon chains, while a peripheral stalk is formed by the delta and b chains.

The protein resides in the cell inner membrane. Functionally, key component of the proton channel; it plays a direct role in the translocation of protons across the membrane. This is ATP synthase subunit a from Gluconobacter oxydans (strain 621H) (Gluconobacter suboxydans).